The sequence spans 274 residues: Large ribosomal subunit protein uL2 (274 aa).

2 disordered regions span residues 28–54 (APHA…TRHI) and 224–274 (VAMN…RRRK). Residues 263–274 (KRTDKMIVRRRK) show a composition bias toward basic and acidic residues.

This sequence belongs to the universal ribosomal protein uL2 family. As to quaternary structure, part of the 50S ribosomal subunit. Forms a bridge to the 30S subunit in the 70S ribosome.

Functionally, one of the primary rRNA binding proteins. Required for association of the 30S and 50S subunits to form the 70S ribosome, for tRNA binding and peptide bond formation. It has been suggested to have peptidyltransferase activity; this is somewhat controversial. Makes several contacts with the 16S rRNA in the 70S ribosome. The polypeptide is Large ribosomal subunit protein uL2 (Pseudomonas fluorescens (strain SBW25)).